The primary structure comprises 389 residues: Nucleic acid dioxygenase ALKBH1 (389 aa).

The interval 86 to 389 (SKWQAYGLKG…VKRARINPDS (304 aa)) is tRNA-binding. Residues tryptophan 144 and 175–177 (YHY) each bind substrate. Residues 208 to 347 (GFEDFRAEAG…RVNMTVRQVL (140 aa)) enclose the Fe2OG dioxygenase domain. 2-oxoglutarate is bound at residue 220-222 (NYY). Fe cation-binding residues include histidine 231, aspartate 233, and histidine 287. Residue aspartate 233 participates in substrate binding. 338-344 (RVNMTVR) contacts 2-oxoglutarate.

It belongs to the alkB family. In terms of assembly, monomer. Interacts with DNAJB6. The cofactor is Fe(2+). As to expression, ubiquitous.

It is found in the nucleus. It localises to the mitochondrion. It carries out the reaction 2'-deoxyribonucleotide-(2'-deoxyribose 5'-phosphate)-2'-deoxyribonucleotide-DNA = a 3'-end 2'-deoxyribonucleotide-(2,3-dehydro-2,3-deoxyribose 5'-phosphate)-DNA + a 5'-end 5'-phospho-2'-deoxyribonucleoside-DNA + H(+). It catalyses the reaction a methylated nucleobase within DNA + 2-oxoglutarate + O2 = a nucleobase within DNA + formaldehyde + succinate + CO2. The catalysed reaction is an N(6)-methyl-2'-deoxyadenosine in DNA + 2-oxoglutarate + O2 = a 2'-deoxyadenosine in DNA + formaldehyde + succinate + CO2. The enzyme catalyses an N(1)-methyladenosine in tRNA + 2-oxoglutarate + O2 = an adenosine in tRNA + formaldehyde + succinate + CO2. It carries out the reaction 5-methylcytidine(34) in mitochondrial tRNA(Met) + 2 2-oxoglutarate + 2 O2 = 5-formylcytidine(34) in mitochondrial tRNA(Met) + 2 succinate + 2 CO2 + H2O. It catalyses the reaction an N(3)-methylcytidine in mRNA + 2-oxoglutarate + O2 = a cytidine in mRNA + formaldehyde + succinate + CO2. The catalysed reaction is N(1)-methyladenosine(58) in tRNA + 2-oxoglutarate + O2 = adenosine(58) in tRNA + formaldehyde + succinate + CO2. Dioxygenase that acts on nucleic acids, such as DNA and tRNA. Requires molecular oxygen, alpha-ketoglutarate and iron. A number of activities have been described for this dioxygenase, but recent results suggest that it mainly acts on tRNAs and mediates their demethylation or oxidation depending on the context and subcellular compartment. Mainly acts as a tRNA demethylase by removing N(1)-methyladenine from various tRNAs, with a preference for N(1)-methyladenine at position 58 (m1A58) present on a stem loop structure of tRNAs. Acts as a regulator of translation initiation and elongation in response to glucose deprivation: regulates both translation initiation, by mediating demethylation of tRNA(Met), and translation elongation, N(1)-methyladenine-containing tRNAs being preferentially recruited to polysomes to promote translation elongation. In mitochondrion, specifically interacts with mt-tRNA(Met) and mediates oxidation of mt-tRNA(Met) methylated at cytosine(34) to form 5-formylcytosine (f(5)c) at this position. mt-tRNA(Met) containing the f(5)c modification at the wobble position enables recognition of the AUA codon in addition to the AUG codon, expanding codon recognition in mitochondrial translation. Specifically demethylates DNA methylated on the 6th position of adenine (N(6)-methyladenosine) DNA. N(6)-methyladenosine (m6A) DNA is present at some L1 elements in embryonic stem cells and probably promotes their silencing. Demethylates mRNAs containing N(3)-methylcytidine modification. Also able to repair alkylated single-stranded DNA by oxidative demethylation, but with low activity. Also has DNA lyase activity and introduces double-stranded breaks at abasic sites: cleaves both single-stranded DNA and double-stranded DNA at abasic sites, with the greatest activity towards double-stranded DNA with two abasic sites. DNA lyase activity does not require alpha-ketoglutarate and iron and leads to the formation of an irreversible covalent protein-DNA adduct with the 5' DNA product. DNA lyase activity is not required during base excision repair and class switch recombination of the immunoglobulin heavy chain during B lymphocyte activation. May play a role in placental trophoblast lineage differentiation. This is Nucleic acid dioxygenase ALKBH1 from Homo sapiens (Human).